The primary structure comprises 181 residues: MSVTIVSKRYASALFDIVLASSAVDETEKELNEIKKVLKADQELNDFLVHPKITADKKKHLIAEAFKGVSTHVLHTMYLLIDRGRTNIFSEMTSEFVKLANRTKQIDDAIVYSVKPLSGAEIQSLSEVFAKKAGVTSLRVENVIDKDLIGGVKIRIGNRIYDGSVSGKLSRIERQLAGENR.

It belongs to the ATPase delta chain family. F-type ATPases have 2 components, F(1) - the catalytic core - and F(0) - the membrane proton channel. F(1) has five subunits: alpha(3), beta(3), gamma(1), delta(1), epsilon(1). F(0) has three main subunits: a(1), b(2) and c(10-14). The alpha and beta chains form an alternating ring which encloses part of the gamma chain. F(1) is attached to F(0) by a central stalk formed by the gamma and epsilon chains, while a peripheral stalk is formed by the delta and b chains.

Its subcellular location is the cell membrane. F(1)F(0) ATP synthase produces ATP from ADP in the presence of a proton or sodium gradient. F-type ATPases consist of two structural domains, F(1) containing the extramembraneous catalytic core and F(0) containing the membrane proton channel, linked together by a central stalk and a peripheral stalk. During catalysis, ATP synthesis in the catalytic domain of F(1) is coupled via a rotary mechanism of the central stalk subunits to proton translocation. Functionally, this protein is part of the stalk that links CF(0) to CF(1). It either transmits conformational changes from CF(0) to CF(1) or is implicated in proton conduction. The polypeptide is ATP synthase subunit delta (Bacillus pumilus (strain SAFR-032)).